Here is a 350-residue protein sequence, read N- to C-terminus: E3 ubiquitin-protein ligase TRIM63 (350 aa).

An RING-type zinc finger spans residues 23–79 (CPICLEMFTKPVVILPCQHNLCRKCANDIFQAANPYWTNRGGSVSMSGGRFRCPSCR). The segment at 74-218 (RCPSCRHEVI…LSQKFDTLYA (145 aa)) is interaction with TTN. A B box-type zinc finger spans residues 117–159 (GSHPMCKEHEDEKINIYCLTCEVPTCSLCKVFGAHQACEVAPL). Zn(2+) is bound by residues Cys-122, His-125, Cys-145, and His-151. Residues 207 to 269 (EELSQKFDTL…VETAIQSLDE (63 aa)) adopt a coiled-coil conformation. Residues 267–325 (LDEPGGATFLSSAKQLIKSNVEASKGCQLGKTEQGFENMDYFTLDLEHIAEALRAIDFG) enclose the COS domain. Positions 325–344 (GTDEEEEEFTEEEADEEEGV) are enriched in acidic residues. The interval 325–350 (GTDEEEEEFTEEEADEEEGVTTEGHQ) is disordered.

In terms of assembly, homodimer. Homooligomer and heterooligomer. Interacts with SUMO2, titin/TTN and GMEB1. Interacts with TRIM54 and probably with TRIM55. Interacts with TNNI3. Forms a ternary complex with RACK1 and PRKCE. Interacts with CKM.

The protein localises to the cytoplasm. Its subcellular location is the nucleus. It localises to the myofibril. The protein resides in the sarcomere. It is found in the m line. The protein localises to the z line. It carries out the reaction S-ubiquitinyl-[E2 ubiquitin-conjugating enzyme]-L-cysteine + [acceptor protein]-L-lysine = [E2 ubiquitin-conjugating enzyme]-L-cysteine + N(6)-ubiquitinyl-[acceptor protein]-L-lysine.. It participates in protein modification; protein ubiquitination. Functionally, E3 ubiquitin ligase. Mediates the ubiquitination and subsequent proteasomal degradation of CKM, GMEB1 and HIBADH. Regulates the proteasomal degradation of muscle proteins under amino acid starvation, where muscle protein is catabolized to provide other organs with amino acids. Inhibits de novo skeletal muscle protein synthesis under amino acid starvation. Regulates proteasomal degradation of cardiac troponin I/TNNI3 and probably of other sarcomeric-associated proteins. May play a role in striated muscle atrophy and hypertrophy by regulating an anti-hypertrophic PKC-mediated signaling pathway. May regulate the organization of myofibrils through TTN in muscle cells. The chain is E3 ubiquitin-protein ligase TRIM63 (Trim63) from Mus musculus (Mouse).